Reading from the N-terminus, the 444-residue chain is Proline--tRNA ligase (444 aa).

This sequence belongs to the class-II aminoacyl-tRNA synthetase family. ProS type 2 subfamily. Homodimer.

It localises to the cytoplasm. The catalysed reaction is tRNA(Pro) + L-proline + ATP = L-prolyl-tRNA(Pro) + AMP + diphosphate. Catalyzes the attachment of proline to tRNA(Pro) in a two-step reaction: proline is first activated by ATP to form Pro-AMP and then transferred to the acceptor end of tRNA(Pro). In Methylobacterium sp. (strain 4-46), this protein is Proline--tRNA ligase.